A 314-amino-acid polypeptide reads, in one-letter code: Oxaloacetate tautomerase FAHD2A, mitochondrial (314 aa).

Residues 1–84 (MLVSGRRRLL…ATLSVARRAL (84 aa)) constitute a mitochondrion transit peptide. Residues E159, E161, and D190 each contribute to the Mg(2+) site.

This sequence belongs to the FAH family. It depends on Mg(2+) as a cofactor. Mn(2+) serves as cofactor.

It localises to the mitochondrion. It catalyses the reaction oxaloacetate = enol-oxaloacetate. Tautomerase that converts enol-oxaloacetate, a strong inhibitor of succinate dehydrogenase, to the physiological keto form of oxaloacetate. It is thereby required to maximize aerobic respiration efficiency by preventing succinate dehydrogenase inhibition. The polypeptide is Oxaloacetate tautomerase FAHD2A, mitochondrial (Homo sapiens (Human)).